An 815-amino-acid polypeptide reads, in one-letter code: Cell division control protein 53 (815 aa).

A required for interaction with SKP1/CBF3D and F-box protein region spans residues 9-280; the sequence is DDLEATWNFI…WDDHTKKPLS (272 aa). The tract at residues 448 to 748 is required for interaction with CDC34/UBC3; sequence KKATKPEVAS…IEKELNTERQ (301 aa). The Cullin neddylation domain occupies 746–807; that stretch reads ERQIFLEACI…QKGYLQRGDD (62 aa). A Glycyl lysine isopeptide (Lys-Gly) (interchain with G-Cter in NEDD8) cross-link involves residue lysine 760.

It belongs to the cullin family. As to quaternary structure, component of multiple SCF (SKP1-CUL1-F-box) E3 ubiquitin-protein ligase complexes formed of CUL1, SKP1/HRT1, RBX1 and a variable F-box domain-containing protein as substrate-specific adapter. Component of the SCF(CDC4) complex containing CDC4. Component of the SCF(MET30) complex containing MET30. Component of the SCF(GRR1) complex containing GRR1. Component of the probable SCF(DIA2) complex containing DIA2. Component of the probable SCF(YDR131C) complex containing YDR131C. Component of the probable SCF(YDR306C) complex containing YDR306C. Component of the probable SCF(YLR224W) complex containing YLR224W. Component of the probable SCF(YJL149W) complex containing YJL149W. Component of the probable SCF(YNL311C) complex containing YNL311C. Component of the probable SCF(MDM30) complex containing MDM30. Component of the probable SCF(UFO1) complex containing UFO1. Component of the probable SCF(HRT3) complex containing HRT3. Component of the probable SCF(YBR280C) complex containing YBR280C. Component of the probable SCF(YBR352W) complex containing YBR352W. Interacts with DCN1, YBR280C, YLR224W and YLR352W. The unneddylated form interacts with LAG2/CAND1 and the interaction mediates the exchange of the F-box substrate-specific subunit. Neddylated; enhancing the ubiquitin-ligase activity.

The protein resides in the cytoplasm. It localises to the nucleus. In terms of biological role, core component of multiple cullin-RING-based SCF (SKP1-CUL1-F-box) E3 ubiquitin-protein ligase complexes which mediate the ubiquitination and subsequent proteasomal degradation of target proteins. As a scaffold protein may contribute to catalysis through positioning of the substrate and the ubiquitin-conjugating enzyme. The SCF complex associates with CDC34 as the E2 ubiquitin-conjugating enzyme. The functional specificity of the SCF complex depends on the type of F-box protein. SCF(CDC4) controls the G1-to-S phase transition; it directs ubiquitination of the phosphorylated CDK inhibitor SIC1 and of CDC6. SCF(CDC4) directs ubiquitination of GCN4. SCF(GRR1) directs ubiquitination of phosphorylated CLN1, CLN2 and GIC2. SCF(MET30) directs ubiquitination of MET4. SCF(DIA2) is specifically involved in the pheromone induced degradation of phosphorylated TEC1. SCF(MDM30) seems to direct ubiquitination of FZ01. Involved in the regulation of methionine biosynthesis genes. The chain is Cell division control protein 53 (CDC53) from Saccharomyces cerevisiae (strain ATCC 204508 / S288c) (Baker's yeast).